We begin with the raw amino-acid sequence, 406 residues long: Phloroisovalerophenone synthase (406 aa).

Cys-171 is an active-site residue.

This sequence belongs to the thiolase-like superfamily. Chalcone/stilbene synthases family.

The catalysed reaction is 3-methylbutanoyl-CoA + 3 malonyl-CoA + 3 H(+) = phlorisovalerophenone + 3 CO2 + 4 CoA. Produces 3-methyl-1-(2,4,6-trihydroxyphenyl)butan-1-one (phloroisovalerophenone). This Psilotum nudum (Whisk fern) protein is Phloroisovalerophenone synthase (VPS).